The primary structure comprises 361 residues: Peptide chain release factor 1 (361 aa).

Gln-236 carries the N5-methylglutamine modification.

Belongs to the prokaryotic/mitochondrial release factor family. In terms of processing, methylated by PrmC. Methylation increases the termination efficiency of RF1.

The protein localises to the cytoplasm. Peptide chain release factor 1 directs the termination of translation in response to the peptide chain termination codons UAG and UAA. The polypeptide is Peptide chain release factor 1 (Lactobacillus delbrueckii subsp. bulgaricus (strain ATCC 11842 / DSM 20081 / BCRC 10696 / JCM 1002 / NBRC 13953 / NCIMB 11778 / NCTC 12712 / WDCM 00102 / Lb 14)).